A 353-amino-acid polypeptide reads, in one-letter code: DNA-directed RNA polymerase subunit alpha (353 aa).

The tract at residues 1–245 (MEKIQKITYK…AHFQIIGNIN (245 aa)) is alpha N-terminal domain (alpha-NTD). Residues 261 to 353 (EREIKSTTPI…QLNNSEEGEE (93 aa)) are alpha C-terminal domain (alpha-CTD).

The protein belongs to the RNA polymerase alpha chain family. In terms of assembly, homodimer. The RNAP catalytic core consists of 2 alpha, 1 beta, 1 beta' and 1 omega subunit. When a sigma factor is associated with the core the holoenzyme is formed, which can initiate transcription.

The enzyme catalyses RNA(n) + a ribonucleoside 5'-triphosphate = RNA(n+1) + diphosphate. Its function is as follows. DNA-dependent RNA polymerase catalyzes the transcription of DNA into RNA using the four ribonucleoside triphosphates as substrates. The protein is DNA-directed RNA polymerase subunit alpha of Mycoplasma sp.